A 454-amino-acid polypeptide reads, in one-letter code: (Z)-3-hexen-1-ol acetyltransferase (454 aa).

Active-site proton acceptor residues include His-174 and Asp-389.

It belongs to the plant acyltransferase family. Expressed in leaves and stems. Lower levels in flowers and barely detected in roots and siliques.

It carries out the reaction (3Z)-hex-3-en-1-ol + acetyl-CoA = (3Z)-hex-3-en-1-yl acetate + CoA. Its activity is regulated as follows. Inhibited by magnesium, calcium, cobalt, zinc and copper. Acyltransferase involved in the production of green leaf volatiles (GLVs). Uses acetyl-CoA as substrate, but not malonyl-CoA or benzoyl-CoA. Prefers primary, medium-chain-length, aliphatic alcohols. In Arabidopsis thaliana (Mouse-ear cress), this protein is (Z)-3-hexen-1-ol acetyltransferase (CHAT).